The sequence spans 368 residues: 3-dehydroquinate synthase (368 aa).

NAD(+) is bound by residues 76 to 81 (DGEQYK), 110 to 114 (GVIGD), 134 to 135 (TT), K147, K156, and 174 to 177 (CLKT). Residues E189, H252, and H269 each contribute to the Zn(2+) site.

Belongs to the sugar phosphate cyclases superfamily. Dehydroquinate synthase family. It depends on NAD(+) as a cofactor. The cofactor is Co(2+). Zn(2+) serves as cofactor.

The protein localises to the cytoplasm. The catalysed reaction is 7-phospho-2-dehydro-3-deoxy-D-arabino-heptonate = 3-dehydroquinate + phosphate. It participates in metabolic intermediate biosynthesis; chorismate biosynthesis; chorismate from D-erythrose 4-phosphate and phosphoenolpyruvate: step 2/7. In terms of biological role, catalyzes the conversion of 3-deoxy-D-arabino-heptulosonate 7-phosphate (DAHP) to dehydroquinate (DHQ). The protein is 3-dehydroquinate synthase of Vibrio vulnificus (strain YJ016).